Here is a 139-residue protein sequence, read N- to C-terminus: Ribonuclease VapC36 (139 aa).

The 127-residue stretch at 1–127 (MIVDTSAVVA…GNDFPQTDLE (127 aa)) folds into the PINc domain. 2 residues coordinate Mg(2+): aspartate 4 and aspartate 100.

The protein belongs to the PINc/VapC protein family. It depends on Mg(2+) as a cofactor.

Its function is as follows. Toxic component of a type II toxin-antitoxin (TA) system. An RNase. Its cognate antitoxin is VapB36. The protein is Ribonuclease VapC36 of Mycobacterium tuberculosis (strain ATCC 25618 / H37Rv).